The primary structure comprises 329 residues: MAKTPMRVAVTGAAGQICYSLLFRIANGDMLGKDQPVILQLLEIPNEKAQKALQGVMMEIDDCAFPLLAGMTAHADPMTAFKDADVALLVGARPRGPGMERKDLLEANAQIFTVQGKAIDAVASRNIKVLVVGNPANTNAYIAMKSAPSLPAKNFTAMLRLDHNRALSQIAAKTGKPVSSIEKLFVWGNHSPTMYADYRYAQIDGASVKDMINDDAWNRDTFLPTVGKRGAAIIDARGVSSAASAANAAIDHIHDWVLGTAGKWTTMGIPSDGSYGIPEGVIFGFPVTTENGEYKIVQGLSIDAFSQERINVTLNELLEEQNGVQHLLG.

12 to 18 (GAAGQIC) is an NAD(+) binding site. Substrate-binding residues include arginine 95 and arginine 101. NAD(+) is bound by residues asparagine 108, glutamine 115, and 132 to 134 (VGN). Substrate-binding residues include asparagine 134 and arginine 165. Catalysis depends on histidine 190, which acts as the Proton acceptor.

It belongs to the LDH/MDH superfamily. MDH type 2 family. As to quaternary structure, homodimer.

It catalyses the reaction (S)-malate + NAD(+) = oxaloacetate + NADH + H(+). Functionally, catalyzes the reversible oxidation of malate to oxaloacetate. This is Malate dehydrogenase from Aquaspirillum arcticum.